Consider the following 599-residue polypeptide: uncharacterized protein (599 aa).

Residue 49 to 56 (GPPGSGKT) coordinates ATP. The Macro domain maps to 416-599 (AEVRKELEYK…TKIFEEKFSV (184 aa)).

It in the N-terminal section; belongs to the AAA ATPase family. RarA/MGS1/WRNIP1 subfamily.

This is an uncharacterized protein from Thermotoga maritima (strain ATCC 43589 / DSM 3109 / JCM 10099 / NBRC 100826 / MSB8).